The chain runs to 610 residues: Glutamine--fructose-6-phosphate aminotransferase [isomerizing] (610 aa).

Catalysis depends on cysteine 2, which acts as the Nucleophile; for GATase activity. A Glutamine amidotransferase type-2 domain is found at 2-218 (CGIVGAVAQR…EGDVAEITRH (217 aa)). SIS domains lie at 286 to 426 (AADI…LKGR) and 459 to 600 (LSED…VDQP). Residue lysine 605 is the For Fru-6P isomerization activity of the active site.

In terms of assembly, homodimer.

The protein localises to the cytoplasm. The enzyme catalyses D-fructose 6-phosphate + L-glutamine = D-glucosamine 6-phosphate + L-glutamate. Catalyzes the first step in hexosamine metabolism, converting fructose-6P into glucosamine-6P using glutamine as a nitrogen source. In Haemophilus ducreyi (strain 35000HP / ATCC 700724), this protein is Glutamine--fructose-6-phosphate aminotransferase [isomerizing].